Here is a 143-residue protein sequence, read N- to C-terminus: Small ribosomal subunit protein bS6 (143 aa).

A disordered region spans residues 100–143 (SPIIKMKDERREVVELTTSGSEDNQKDHHKEDLDKKTDEFSEEN). 2 stretches are compositionally biased toward basic and acidic residues: residues 104 to 113 (KMKDERREVV) and 122 to 143 (DNQK…SEEN).

This sequence belongs to the bacterial ribosomal protein bS6 family.

Functionally, binds together with bS18 to 16S ribosomal RNA. This is Small ribosomal subunit protein bS6 from Hamiltonella defensa subsp. Acyrthosiphon pisum (strain 5AT).